Reading from the N-terminus, the 321-residue chain is tRNA-dihydrouridine synthase B (321 aa).

Residues 16–18 (PMA) and Gln-70 contribute to the FMN site. Cys-100 serves as the catalytic Proton donor. Residues Lys-139, 200–202 (NGD), and 224–225 (GR) contribute to the FMN site.

Belongs to the Dus family. DusB subfamily. It depends on FMN as a cofactor.

It carries out the reaction a 5,6-dihydrouridine in tRNA + NAD(+) = a uridine in tRNA + NADH + H(+). It catalyses the reaction a 5,6-dihydrouridine in tRNA + NADP(+) = a uridine in tRNA + NADPH + H(+). In terms of biological role, catalyzes the synthesis of 5,6-dihydrouridine (D), a modified base found in the D-loop of most tRNAs, via the reduction of the C5-C6 double bond in target uridines. The chain is tRNA-dihydrouridine synthase B from Pectobacterium carotovorum (Erwinia carotovora).